The primary structure comprises 363 residues: Histidinol-phosphate aminotransferase (363 aa).

Position 226 is an N6-(pyridoxal phosphate)lysine (Lys226).

The protein belongs to the class-II pyridoxal-phosphate-dependent aminotransferase family. Histidinol-phosphate aminotransferase subfamily. As to quaternary structure, homodimer. Pyridoxal 5'-phosphate is required as a cofactor.

It catalyses the reaction L-histidinol phosphate + 2-oxoglutarate = 3-(imidazol-4-yl)-2-oxopropyl phosphate + L-glutamate. It functions in the pathway amino-acid biosynthesis; L-histidine biosynthesis; L-histidine from 5-phospho-alpha-D-ribose 1-diphosphate: step 7/9. In Campylobacter lari (strain RM2100 / D67 / ATCC BAA-1060), this protein is Histidinol-phosphate aminotransferase.